The sequence spans 169 residues: MERAIFAGGCFWCMVQPFEELDGIESVLSGYTGGHVENPTYKEVCSKTTGHTEAVEIIFNPEKISYANLVELYWAQTDPTDAFGQFEDRGDNYRPVIFYENEEQRQIAQKSKDKLQASGRFDRPIVTSIEPADTFYPAEDYHQAFYRTNPARYALSSARRHAFLEENWH.

The active site involves cysteine 10.

The protein belongs to the MsrA Met sulfoxide reductase family.

The enzyme catalyses L-methionyl-[protein] + [thioredoxin]-disulfide + H2O = L-methionyl-(S)-S-oxide-[protein] + [thioredoxin]-dithiol. It catalyses the reaction [thioredoxin]-disulfide + L-methionine + H2O = L-methionine (S)-S-oxide + [thioredoxin]-dithiol. Has an important function as a repair enzyme for proteins that have been inactivated by oxidation. Catalyzes the reversible oxidation-reduction of methionine sulfoxide in proteins to methionine. This chain is Peptide methionine sulfoxide reductase MsrA, found in Streptococcus agalactiae serotype III (strain NEM316).